The chain runs to 298 residues: ADP/ATP translocase 3 (298 aa).

An N-acetylmethionine modification is found at Met1. Topologically, residues 1–7 are mitochondrial intermembrane; that stretch reads MTEQAIS. Thr2 bears the N-acetylthreonine; in ADP/ATP translocase 3, N-terminally processed mark. A Solcar 1 repeat occupies 6–98; the sequence is ISFAKDFLAG…FAFKDKYKQI (93 aa). A helical transmembrane segment spans residues 8–37; sequence FAKDFLAGGIAAAISKTAVAPIERVKLLLQ. Residues 38 to 74 lie on the Mitochondrial matrix side of the membrane; it reads VQHASKQIAADKQYKGIVDCIVRIPKEQGVLSFWRGN. The residue at position 52 (Lys52) is an N6,N6,N6-trimethyllysine. A helical transmembrane segment spans residues 75 to 99; the sequence is LANVIRYFPTQALNFAFKDKYKQIF. ADP is bound by residues Arg80 and Lys92. The Mitochondrial intermembrane segment spans residues 100-109; that stretch reads LGGVDKHTQF. Lys105 is modified (N6-acetyllysine). A helical transmembrane segment spans residues 110–130; it reads WRYFAGNLASGGAAGATSLCF. 2 Solcar repeats span residues 111–201 and 212–297; these read RYFA…AKGM and VSWM…LKKV. At 131-178 the chain is on the mitochondrial matrix side; it reads VYPLDFARTRLAADVGKSATEREFKGLGDCLVKITKSDGIRGLYQGFN. Residues 179 to 199 traverse the membrane as a helical segment; the sequence is VSVQGIIIYRAAYFGVYGTAK. The Mitochondrial intermembrane segment spans residues 200-210; that stretch reads GMLPDPRNTHI. The chain crosses the membrane as a helical span at residues 211 to 231; it reads VVSWMIAQTVTAVAGVFSYPF. The Mitochondrial matrix portion of the chain corresponds to 232–273; sequence DTVRRRMMMQSGRKGADIMYKGTLDCWRKIFKDEGGKAFFKG. Arg235 is a binding site for ADP. Residues 235–240 are important for transport activity; the sequence is RRRMMM. Positions 235–240 match the Nucleotide carrier signature motif motif; it reads RRRMMM. Lys268 is subject to N6-acetyllysine. Residues 274–291 form a helical membrane-spanning segment; sequence AWSNVLRGMGGAFVLVLY. Topologically, residues 292–298 are mitochondrial intermembrane; sequence DELKKVI.

It belongs to the mitochondrial carrier (TC 2.A.29) family. Monomer. Found in a complex with ARL2, ARL2BP and SLC25A6/ANT3. In terms of processing, trimethylated by ANTKMT at Lys-52.

The protein localises to the mitochondrion inner membrane. The protein resides in the membrane. It carries out the reaction ADP(in) + ATP(out) = ADP(out) + ATP(in). The catalysed reaction is H(+)(in) = H(+)(out). With respect to regulation, the matrix-open state (m-state) is inhibited by the membrane-permeable bongkrekic acid (BKA). The cytoplasmic-open state (c-state) is inhibited by the membrane-impermeable toxic inhibitor carboxyatractyloside (CATR). Proton transporter activity is inhibited by ADP:ATP antiporter activity. In terms of biological role, ADP:ATP antiporter that mediates import of ADP into the mitochondrial matrix for ATP synthesis, and export of ATP out to fuel the cell. Cycles between the cytoplasmic-open state (c-state) and the matrix-open state (m-state): operates by the alternating access mechanism with a single substrate-binding site intermittently exposed to either the cytosolic (c-state) or matrix (m-state) side of the inner mitochondrial membrane. In addition to its ADP:ATP antiporter activity, also involved in mitochondrial uncoupling and mitochondrial permeability transition pore (mPTP) activity. Plays a role in mitochondrial uncoupling by acting as a proton transporter: proton transport uncouples the proton flows via the electron transport chain and ATP synthase to reduce the efficiency of ATP production and cause mitochondrial thermogenesis. Proton transporter activity is inhibited by ADP:ATP antiporter activity, suggesting that SLC25A6/ANT3 acts as a master regulator of mitochondrial energy output by maintaining a delicate balance between ATP production (ADP:ATP antiporter activity) and thermogenesis (proton transporter activity). Proton transporter activity requires free fatty acids as cofactor, but does not transport it. Also plays a key role in mPTP opening, a non-specific pore that enables free passage of the mitochondrial membranes to solutes of up to 1.5 kDa, and which contributes to cell death. It is however unclear if SLC25A6/ANT3 constitutes a pore-forming component of mPTP or regulates it. The sequence is that of ADP/ATP translocase 3 from Sus scrofa (Pig).